The following is a 301-amino-acid chain: tRNA pseudouridine synthase B (301 aa).

Residue aspartate 47 is the Nucleophile of the active site.

It belongs to the pseudouridine synthase TruB family. Type 1 subfamily.

It catalyses the reaction uridine(55) in tRNA = pseudouridine(55) in tRNA. Functionally, responsible for synthesis of pseudouridine from uracil-55 in the psi GC loop of transfer RNAs. This Cereibacter sphaeroides (strain ATCC 17025 / ATH 2.4.3) (Rhodobacter sphaeroides) protein is tRNA pseudouridine synthase B.